We begin with the raw amino-acid sequence, 178 residues long: Large ribosomal subunit protein uL6 (178 aa).

The protein belongs to the universal ribosomal protein uL6 family. As to quaternary structure, part of the 50S ribosomal subunit.

This protein binds to the 23S rRNA, and is important in its secondary structure. It is located near the subunit interface in the base of the L7/L12 stalk, and near the tRNA binding site of the peptidyltransferase center. This Buchnera aphidicola subsp. Schizaphis graminum (strain Sg) protein is Large ribosomal subunit protein uL6.